We begin with the raw amino-acid sequence, 404 residues long: Cysteine desulfurase IscS (404 aa).

Residues 75-76 (AT), N155, Q183, and 203-205 (SAH) each bind pyridoxal 5'-phosphate. The residue at position 206 (K206) is an N6-(pyridoxal phosphate)lysine. Residue T243 coordinates pyridoxal 5'-phosphate. C328 functions as the Cysteine persulfide intermediate in the catalytic mechanism. A [2Fe-2S] cluster-binding site is contributed by C328.

It belongs to the class-V pyridoxal-phosphate-dependent aminotransferase family. NifS/IscS subfamily. As to quaternary structure, homodimer. Forms a heterotetramer with IscU, interacts with other sulfur acceptors. Requires pyridoxal 5'-phosphate as cofactor.

Its subcellular location is the cytoplasm. The catalysed reaction is (sulfur carrier)-H + L-cysteine = (sulfur carrier)-SH + L-alanine. The protein operates within cofactor biosynthesis; iron-sulfur cluster biosynthesis. Its function is as follows. Master enzyme that delivers sulfur to a number of partners involved in Fe-S cluster assembly, tRNA modification or cofactor biosynthesis. Catalyzes the removal of elemental sulfur atoms from cysteine to produce alanine. Functions as a sulfur delivery protein for Fe-S cluster synthesis onto IscU, an Fe-S scaffold assembly protein, as well as other S acceptor proteins. In Shewanella sediminis (strain HAW-EB3), this protein is Cysteine desulfurase IscS.